The chain runs to 192 residues: Ribosome maturation factor RimP (192 aa).

The protein belongs to the RimP family.

Its subcellular location is the cytoplasm. In terms of biological role, required for maturation of 30S ribosomal subunits. This Mycobacterium sp. (strain JLS) protein is Ribosome maturation factor RimP.